The sequence spans 717 residues: DNA ligase (717 aa).

NAD(+)-binding positions include 44–48 (DADYD), 93–94 (SL), and E127. K129 acts as the N6-AMP-lysine intermediate in catalysis. 4 residues coordinate NAD(+): R150, E186, K302, and K326. The Zn(2+) site is built by C431, C434, C455, and C461. The 79-residue stretch at 639–717 (ATDSPVAGKT…EDEWLALIGG (79 aa)) folds into the BRCT domain.

The protein belongs to the NAD-dependent DNA ligase family. LigA subfamily. Requires Mg(2+) as cofactor. It depends on Mn(2+) as a cofactor.

The catalysed reaction is NAD(+) + (deoxyribonucleotide)n-3'-hydroxyl + 5'-phospho-(deoxyribonucleotide)m = (deoxyribonucleotide)n+m + AMP + beta-nicotinamide D-nucleotide.. In terms of biological role, DNA ligase that catalyzes the formation of phosphodiester linkages between 5'-phosphoryl and 3'-hydroxyl groups in double-stranded DNA using NAD as a coenzyme and as the energy source for the reaction. It is essential for DNA replication and repair of damaged DNA. This is DNA ligase from Sinorhizobium medicae (strain WSM419) (Ensifer medicae).